We begin with the raw amino-acid sequence, 74 residues long: High-potential iron-sulfur protein (74 aa).

[4Fe-4S] cluster-binding residues include Cys-36, Cys-39, Cys-53, and Cys-67.

The protein belongs to the high-potential iron-sulfur protein (HiPIP) family. In terms of assembly, homodimer.

Functionally, specific class of high-redox-potential 4Fe-4S ferredoxins. Functions in anaerobic electron transport in most purple and in some other photosynthetic bacteria and in at least one genus (Paracoccus) of halophilic, denitrifying bacteria. The polypeptide is High-potential iron-sulfur protein (hip) (Rubrivivax gelatinosus (Rhodocyclus gelatinosus)).